Consider the following 608-residue polypeptide: Albumin (608 aa).

An N-terminal signal peptide occupies residues 1-18 (MKWVTFISLLLLFSSAYS). Positions 19–24 (RGVTRR) are excised as a propeptide. Albumin domains are found at residues 19-210 (RGVT…DALR), 211-403 (EKVL…EFKP), and 404-601 (LVEE…KLVA). H27 contacts Cu cation. The residue at position 29 (S29) is a Phosphoserine. Ca(2+)-binding residues include E30 and D37. Residues C77 and C86 are joined by a disulfide bond. Phosphoserine is present on residues S82 and S89. Position 91 (H91) interacts with Zn(2+). 6 disulfides stabilise this stretch: C99/C115, C114/C125, C148/C193, C192/C201, C224/C270, and C269/C277. K229 is subject to N6-succinyllysine. E268 contacts Ca(2+). Residues H271 and D273 each contribute to the Zn(2+) site. Ca(2+) is bound by residues D273, E276, D279, and D283. 8 cysteine pairs are disulfide-bonded: C289–C303, C302–C313, C340–C385, C384–C393, C416–C462, C461–C472, C485–C501, and C500–C511. S443 carries the post-translational modification Phosphoserine. A phosphothreonine mark is found at T444 and T446. K460 bears the N6-succinyllysine mark. S513 carries the post-translational modification Phosphoserine. Intrachain disulfides connect C538–C583 and C582–C591. K558 is modified (N6-methyllysine). T570 is subject to Phosphothreonine. Position 588 is an N6-succinyllysine (K588).

Belongs to the ALB/AFP/VDB family. In terms of assembly, interacts with FCGRT; this interaction regulates ALB homeostasis. Interacts with TASOR. In plasma, occurs in a covalently-linked complex with chromophore-bound alpha-1-microglobulin; this interaction does not prevent fatty acid binding to ALB. Post-translationally, phosphorylated by FAM20C in the extracellular medium. As to expression, plasma.

The protein localises to the secreted. Binds water, Ca(2+), Na(+), K(+), fatty acids, hormones, bilirubin and drugs. Its main function is the regulation of the colloidal osmotic pressure of blood. Major zinc transporter in plasma, typically binds about 80% of all plasma zinc. Major calcium and magnesium transporter in plasma, binds approximately 45% of circulating calcium and magnesium in plasma. Potentially has more than two calcium-binding sites and might additionally bind calcium in a non-specific manner. The shared binding site between zinc and calcium at residue Asp-273 suggests a crosstalk between zinc and calcium transport in the blood. The rank order of affinity is zinc &gt; calcium &gt; magnesium. Binds to the bacterial siderophore enterobactin and inhibits enterobactin-mediated iron uptake of E.coli from ferric transferrin, and may thereby limit the utilization of iron and growth of enteric bacteria such as E.coli. Does not prevent iron uptake by the bacterial siderophore aerobactin. This Felis catus (Cat) protein is Albumin (ALB).